Here is a 91-residue protein sequence, read N- to C-terminus: MVKIRLARFGSKHNPHYPHYRIVVTDARRKRDGKYIEKIGYYDPRKTTPDWLKVDVERARYWLSVGAQPTDTARRLLRQAGVFRQEAREGA.

It belongs to the bacterial ribosomal protein bS16 family. Part of the 30S ribosomal subunit.

In terms of biological role, binds to the lower part of the body of the 30S subunit, where it stabilizes two of its domains. This is Small ribosomal subunit protein bS16 from Thermus thermophilus.